The primary structure comprises 366 residues: Ribosomal RNA large subunit methyltransferase M (366 aa).

S-adenosyl-L-methionine contacts are provided by residues S188, 221–224 (CPGG), D240, D260, and D277. Catalysis depends on K306, which acts as the Proton acceptor.

The protein belongs to the class I-like SAM-binding methyltransferase superfamily. RNA methyltransferase RlmE family. RlmM subfamily. As to quaternary structure, monomer.

The protein resides in the cytoplasm. It catalyses the reaction cytidine(2498) in 23S rRNA + S-adenosyl-L-methionine = 2'-O-methylcytidine(2498) in 23S rRNA + S-adenosyl-L-homocysteine + H(+). In terms of biological role, catalyzes the 2'-O-methylation at nucleotide C2498 in 23S rRNA. In Shigella sonnei (strain Ss046), this protein is Ribosomal RNA large subunit methyltransferase M.